A 226-amino-acid chain; its full sequence is Cytidylate kinase (226 aa).

Residue 14-22 (GPAGAGKST) coordinates ATP.

This sequence belongs to the cytidylate kinase family. Type 1 subfamily.

Its subcellular location is the cytoplasm. The enzyme catalyses CMP + ATP = CDP + ADP. It carries out the reaction dCMP + ATP = dCDP + ADP. In Symbiobacterium thermophilum (strain DSM 24528 / JCM 14929 / IAM 14863 / T), this protein is Cytidylate kinase.